The sequence spans 253 residues: MQKLIMGNWKMNGNSTSIKELCSGISQVQYDTSRVAIAVFPSSVYVKEVISQLPEKVGVGLQNITFYDDGAYTGEISARMLEDIGCDYLLIGHSERRSLFAESDEDVFKKLNKIIDTTITPVVCIGESLDDRKSGKLKQVLATQLSLILENLSVEQLAKVVIAYEPVWAIGTGVVASLEQIQETHQFIRSLLAKVDERLAKNIKIVYGGSLKAENAKDILSLPDVDGGLIGGASLKAAEFNEIINQANKICTE.

8 to 10 is a binding site for substrate; sequence NWK. His-93 functions as the Electrophile in the catalytic mechanism. Residue Glu-165 is the Proton acceptor of the active site. Substrate is bound by residues Gly-171, Ser-210, and 231–232; that span reads GG.

It belongs to the triosephosphate isomerase family. In terms of assembly, homodimer.

It is found in the cytoplasm. It carries out the reaction D-glyceraldehyde 3-phosphate = dihydroxyacetone phosphate. Its pathway is carbohydrate biosynthesis; gluconeogenesis. It functions in the pathway carbohydrate degradation; glycolysis; D-glyceraldehyde 3-phosphate from glycerone phosphate: step 1/1. In terms of biological role, involved in the gluconeogenesis. Catalyzes stereospecifically the conversion of dihydroxyacetone phosphate (DHAP) to D-glyceraldehyde-3-phosphate (G3P). This Francisella tularensis subsp. holarctica (strain FTNF002-00 / FTA) protein is Triosephosphate isomerase.